An 894-amino-acid chain; its full sequence is Bifunctional glutamine synthetase adenylyltransferase/adenylyl-removing enzyme (894 aa).

An adenylyl removase region spans residues Met-1–Ser-410. The segment at Ser-415–Ser-894 is adenylyl transferase.

Belongs to the GlnE family. It depends on Mg(2+) as a cofactor.

It carries out the reaction [glutamine synthetase]-O(4)-(5'-adenylyl)-L-tyrosine + phosphate = [glutamine synthetase]-L-tyrosine + ADP. It catalyses the reaction [glutamine synthetase]-L-tyrosine + ATP = [glutamine synthetase]-O(4)-(5'-adenylyl)-L-tyrosine + diphosphate. In terms of biological role, involved in the regulation of glutamine synthetase GlnA, a key enzyme in the process to assimilate ammonia. When cellular nitrogen levels are high, the C-terminal adenylyl transferase (AT) inactivates GlnA by covalent transfer of an adenylyl group from ATP to specific tyrosine residue of GlnA, thus reducing its activity. Conversely, when nitrogen levels are low, the N-terminal adenylyl removase (AR) activates GlnA by removing the adenylyl group by phosphorolysis, increasing its activity. The regulatory region of GlnE binds the signal transduction protein PII (GlnB) which indicates the nitrogen status of the cell. In Chromobacterium violaceum (strain ATCC 12472 / DSM 30191 / JCM 1249 / CCUG 213 / NBRC 12614 / NCIMB 9131 / NCTC 9757 / MK), this protein is Bifunctional glutamine synthetase adenylyltransferase/adenylyl-removing enzyme.